We begin with the raw amino-acid sequence, 109 residues long: Thioredoxin 1 (109 aa).

The Thioredoxin domain occupies 2–109; sequence SDKIIHLTDD…LKEFLDANLA (108 aa). Active-site nucleophile residues include Cys-33 and Cys-36. Cysteines 33 and 36 form a disulfide. Lys-70 is modified (N6-acetyllysine).

It belongs to the thioredoxin family. In terms of assembly, monomer.

Participates in various redox reactions through the reversible oxidation of its active center dithiol to a disulfide and catalyzes dithiol-disulfide exchange reactions. The chain is Thioredoxin 1 (trxA) from Escherichia coli O157:H7.